Consider the following 60-residue polypeptide: Large ribosomal subunit protein uL30 (60 aa).

This sequence belongs to the universal ribosomal protein uL30 family. In terms of assembly, part of the 50S ribosomal subunit.

This chain is Large ribosomal subunit protein uL30, found in Sphingopyxis alaskensis (strain DSM 13593 / LMG 18877 / RB2256) (Sphingomonas alaskensis).